The sequence spans 354 residues: MVSSRMASGETILVTGGAGFIGSHTVVQLLKQGFHVSIIDNLYNSVIDAVHRVRLLVGPLLSSNLHFHHGDLRNIHDLDILFSKTKFDAVIHFAGLKGVGESVLNPSNYYDNNLVATINLFQVMSKFNCKKLVISSSATVYGQPDQIPCVEDSNLHAMNPYGRSKLFVEEVARDIQRAEAEWRIILLRYFNPVGAHESGQIGEDPRGLPNNLMPYIQQVAVARLPELNIYGHDYPTKDGTAIRDYIHVMDLADGHIAALRKLFTTDNIGCTAYNLGTGRGTSVLEMVAAFEKASGKKIPIKMCPRRPGDATAVYASTEKAEKELGWKAKYGVEEMCRDQWKWASNNPWGYQGKH.

11–42 contributes to the NAD(+) binding site; the sequence is TILVTGGAGFIGSHTVVQLLKQGFHVSIIDNL. Residue serine 137 participates in substrate binding. Tyrosine 161 serves as the catalytic Proton acceptor.

Belongs to the NAD(P)-dependent epimerase/dehydratase family. Requires NAD(+) as cofactor.

It carries out the reaction UDP-alpha-D-glucose = UDP-alpha-D-galactose. The protein operates within carbohydrate metabolism; galactose metabolism. The sequence is that of UDP-glucose 4-epimerase GEPI42 from Cyamopsis tetragonoloba (Guar).